Here is a 432-residue protein sequence, read N- to C-terminus: Adenylosuccinate synthetase (432 aa).

GTP is bound by residues 13 to 19 (GDEGKGK) and 41 to 43 (GHT). Residue Asp14 is the Proton acceptor of the active site. Positions 14 and 41 each coordinate Mg(2+). IMP-binding positions include 14-17 (DEGK), 39-42 (NAGH), Thr130, Arg144, Gln225, Thr240, and Arg304. His42 functions as the Proton donor in the catalytic mechanism. 300-306 (STTGRPR) contributes to the substrate binding site. GTP contacts are provided by residues Arg306, 332 to 334 (KLD), and 416 to 418 (STG).

It belongs to the adenylosuccinate synthetase family. As to quaternary structure, homodimer. Mg(2+) serves as cofactor.

It is found in the cytoplasm. The catalysed reaction is IMP + L-aspartate + GTP = N(6)-(1,2-dicarboxyethyl)-AMP + GDP + phosphate + 2 H(+). It participates in purine metabolism; AMP biosynthesis via de novo pathway; AMP from IMP: step 1/2. Plays an important role in the de novo pathway of purine nucleotide biosynthesis. Catalyzes the first committed step in the biosynthesis of AMP from IMP. This is Adenylosuccinate synthetase from Nitrosomonas europaea (strain ATCC 19718 / CIP 103999 / KCTC 2705 / NBRC 14298).